Here is a 304-residue protein sequence, read N- to C-terminus: Cyclin-dependent kinase 3 (304 aa).

The Protein kinase domain maps to 4–286; sequence FQKVEKIGEG…AKTALAHPYF (283 aa). Residues 10–18 and K33 contribute to the ATP site; that span reads IGEGTYGVV. D127 (proton acceptor) is an active-site residue.

This sequence belongs to the protein kinase superfamily. CMGC Ser/Thr protein kinase family. CDC2/CDKX subfamily. In terms of assembly, interacts with CABLES1 and ATF1. Binding to CCNC/cyclin-C promotes RB1 phosphorylation. Binds to CABLES2.

The catalysed reaction is L-seryl-[protein] + ATP = O-phospho-L-seryl-[protein] + ADP + H(+). The enzyme catalyses L-threonyl-[protein] + ATP = O-phospho-L-threonyl-[protein] + ADP + H(+). Its function is as follows. Serine/threonine-protein kinase that plays a critical role in the control of the eukaryotic cell cycle; involved in G0-G1 and G1-S cell cycle transitions. Interacts with CCNC/cyclin-C during interphase. Phosphorylates histone H1, ATF1, RB1 and CABLES1. ATF1 phosphorylation triggers ATF1 transactivation and transcriptional activities, and promotes cell proliferation and transformation. CDK3/cyclin-C mediated RB1 phosphorylation is required for G0-G1 transition. Promotes G1-S transition probably by contributing to the activation of E2F1, E2F2 and E2F3 in a RB1-independent manner. This is Cyclin-dependent kinase 3 (Cdk3) from Mus musculus (Mouse).